The following is a 755-amino-acid chain: Ribosome biogenesis protein BOP1 (755 aa).

Composition is skewed to polar residues over residues 1–10 (MSQEPSSSFS) and 43–61 (ELSS…TEPN). The interval 1–65 (MSQEPSSSFS…PLTEPNNIPI (65 aa)) is disordered. An interaction with EB1 region spans residues 309–754 (MDSMLPTLPN…SGTDGVLRLF (446 aa)). The stretch at 335–374 (TGTRRINGLTFSPKGMFFAVGGRDCILRVFETYSGRQVRA) is one WD 1 repeat. The interval 482-505 (YNEGSEDDDAAESARFNEERHQRG) is disordered. Positions 496–505 (RFNEERHQRG) are enriched in basic and acidic residues. 3 WD repeats span residues 617-655 (PGVK…EPTA), 659-698 (YHTS…LVKM), and 725-755 (DGSV…RLFK).

The protein belongs to the WD repeat BOP1/ERB1 family. As to quaternary structure, interacts (via C-terminal WD repeats) with giardin subunit beta. Interacts (via C-terminal WD repeats) with EB1.

It is found in the nucleus. Its subcellular location is the nucleolus. It localises to the nucleus membrane. Required for maturation of ribosomal RNAs and formation of the large ribosomal subunit. This chain is Ribosome biogenesis protein BOP1, found in Giardia intestinalis (Giardia lamblia).